A 186-amino-acid chain; its full sequence is Myosin light chain 1, skeletal muscle isoform (186 aa).

At M1 the chain carries Blocked amino end (Met). Residues M1–A26 are disordered. A compositionally biased stretch (pro residues) spans A12–A26. 2 EF-hand domains span residues D42 to N77 and A119 to K154.

In terms of assembly, myosin is a hexamer of 2 heavy chains and 4 light chains.

The chain is Myosin light chain 1, skeletal muscle isoform from Chelon ramada (Thin-lipped grey mullet).